The chain runs to 256 residues: 5-keto-4-deoxy-D-glucarate aldolase (256 aa).

His50 acts as the Proton acceptor in catalysis. Gln151 is a substrate binding site. Glu153 is a Mg(2+) binding site. Substrate-binding residues include Ser178 and Asp179. Asp179 provides a ligand contact to Mg(2+).

It belongs to the HpcH/HpaI aldolase family. KDGluc aldolase subfamily. As to quaternary structure, homohexamer; trimer of dimers. The cofactor is Mg(2+).

It catalyses the reaction 5-dehydro-4-deoxy-D-glucarate = 2-hydroxy-3-oxopropanoate + pyruvate. The catalysed reaction is 2-dehydro-3-deoxy-D-glucarate = 2-hydroxy-3-oxopropanoate + pyruvate. It functions in the pathway carbohydrate acid metabolism; galactarate degradation; D-glycerate from galactarate: step 2/3. Its function is as follows. Catalyzes the reversible retro-aldol cleavage of both 5-keto-4-deoxy-D-glucarate and 2-keto-3-deoxy-D-glucarate to pyruvate and tartronic semialdehyde. The sequence is that of 5-keto-4-deoxy-D-glucarate aldolase from Salmonella paratyphi A (strain ATCC 9150 / SARB42).